The sequence spans 63 residues: Large ribosomal subunit protein uL30 (63 aa).

This sequence belongs to the universal ribosomal protein uL30 family. Part of the 50S ribosomal subunit.

The chain is Large ribosomal subunit protein uL30 from Chlorobium chlorochromatii (strain CaD3).